Here is a 242-residue protein sequence, read N- to C-terminus: Ribonuclease PH (242 aa).

Phosphate contacts are provided by residues Arg89 and 127–129 (GTR).

It belongs to the RNase PH family. As to quaternary structure, homohexameric ring arranged as a trimer of dimers.

It carries out the reaction tRNA(n+1) + phosphate = tRNA(n) + a ribonucleoside 5'-diphosphate. Its function is as follows. Phosphorolytic 3'-5' exoribonuclease that plays an important role in tRNA 3'-end maturation. Removes nucleotide residues following the 3'-CCA terminus of tRNAs; can also add nucleotides to the ends of RNA molecules by using nucleoside diphosphates as substrates, but this may not be physiologically important. Probably plays a role in initiation of 16S rRNA degradation (leading to ribosome degradation) during starvation. In Neisseria meningitidis serogroup B (strain ATCC BAA-335 / MC58), this protein is Ribonuclease PH.